The primary structure comprises 64 residues: Beta-defensin 2 (64 aa).

The first 22 residues, 1–22 (MRLHHLLLVLFFVVLSAGSGFT), serve as a signal peptide directing secretion. Disulfide bonds link cysteine 31–cysteine 60, cysteine 38–cysteine 53, and cysteine 43–cysteine 61.

The protein belongs to the beta-defensin family.

It localises to the secreted. Has bactericidal activity. The protein is Beta-defensin 2 (DEFB2) of Ovis aries (Sheep).